The following is a 740-amino-acid chain: Elongation factor 2 (740 aa).

A tr-type G domain is found at 23-264 (AQIRNAGTLA…MIIEHVPPPN (242 aa)). Residues 32–39 (AHVDHGKT), 98–102 (DTPGH), and 152–155 (NKID) contribute to the GTP site. His605 is modified (diphthamide).

It belongs to the TRAFAC class translation factor GTPase superfamily. Classic translation factor GTPase family. EF-G/EF-2 subfamily.

It localises to the cytoplasm. Catalyzes the GTP-dependent ribosomal translocation step during translation elongation. During this step, the ribosome changes from the pre-translocational (PRE) to the post-translocational (POST) state as the newly formed A-site-bound peptidyl-tRNA and P-site-bound deacylated tRNA move to the P and E sites, respectively. Catalyzes the coordinated movement of the two tRNA molecules, the mRNA and conformational changes in the ribosome. This is Elongation factor 2 from Pyrobaculum islandicum (strain DSM 4184 / JCM 9189 / GEO3).